A 123-amino-acid polypeptide reads, in one-letter code: Small ribosomal subunit protein uS12 (123 aa).

The interval 1–29 is disordered; it reads MPTINQLVRKGREPQKAKSKVPAMEQNPQ. Aspartate 89 is subject to 3-methylthioaspartic acid.

Belongs to the universal ribosomal protein uS12 family. Part of the 30S ribosomal subunit. Contacts proteins S8 and S17. May interact with IF1 in the 30S initiation complex.

Functionally, with S4 and S5 plays an important role in translational accuracy. Interacts with and stabilizes bases of the 16S rRNA that are involved in tRNA selection in the A site and with the mRNA backbone. Located at the interface of the 30S and 50S subunits, it traverses the body of the 30S subunit contacting proteins on the other side and probably holding the rRNA structure together. The combined cluster of proteins S8, S12 and S17 appears to hold together the shoulder and platform of the 30S subunit. The polypeptide is Small ribosomal subunit protein uS12 (Novosphingobium aromaticivorans (strain ATCC 700278 / DSM 12444 / CCUG 56034 / CIP 105152 / NBRC 16084 / F199)).